Here is a 281-residue protein sequence, read N- to C-terminus: ATP phosphoribosyltransferase (281 aa).

Belongs to the ATP phosphoribosyltransferase family. Long subfamily. Mg(2+) serves as cofactor.

Its subcellular location is the cytoplasm. The enzyme catalyses 1-(5-phospho-beta-D-ribosyl)-ATP + diphosphate = 5-phospho-alpha-D-ribose 1-diphosphate + ATP. It functions in the pathway amino-acid biosynthesis; L-histidine biosynthesis; L-histidine from 5-phospho-alpha-D-ribose 1-diphosphate: step 1/9. Its activity is regulated as follows. Feedback inhibited by histidine. In terms of biological role, catalyzes the condensation of ATP and 5-phosphoribose 1-diphosphate to form N'-(5'-phosphoribosyl)-ATP (PR-ATP). Has a crucial role in the pathway because the rate of histidine biosynthesis seems to be controlled primarily by regulation of HisG enzymatic activity. The polypeptide is ATP phosphoribosyltransferase (Natronomonas pharaonis (strain ATCC 35678 / DSM 2160 / CIP 103997 / JCM 8858 / NBRC 14720 / NCIMB 2260 / Gabara) (Halobacterium pharaonis)).